Consider the following 234-residue polypeptide: tRNA (guanine-N(1)-)-methyltransferase (234 aa).

Residues G110 and 134-139 each bind S-adenosyl-L-methionine; that span reads IGDYVL.

This sequence belongs to the RNA methyltransferase TrmD family. Homodimer.

The protein resides in the cytoplasm. It catalyses the reaction guanosine(37) in tRNA + S-adenosyl-L-methionine = N(1)-methylguanosine(37) in tRNA + S-adenosyl-L-homocysteine + H(+). Specifically methylates guanosine-37 in various tRNAs. This chain is tRNA (guanine-N(1)-)-methyltransferase, found in Tropheryma whipplei (strain Twist) (Whipple's bacillus).